A 99-amino-acid chain; its full sequence is NADH-quinone oxidoreductase subunit K (99 aa).

Helical transmembrane passes span 3–23, 28–48, and 59–79; these read PDNY…GVLL, IVVF…FVAF, and VVAF…LAII.

This sequence belongs to the complex I subunit 4L family. In terms of assembly, NDH-1 is composed of 14 different subunits. Subunits NuoA, H, J, K, L, M, N constitute the membrane sector of the complex.

It is found in the cell membrane. It carries out the reaction a quinone + NADH + 5 H(+)(in) = a quinol + NAD(+) + 4 H(+)(out). NDH-1 shuttles electrons from NADH, via FMN and iron-sulfur (Fe-S) centers, to quinones in the respiratory chain. The immediate electron acceptor for the enzyme in this species is believed to be a menaquinone. Couples the redox reaction to proton translocation (for every two electrons transferred, four hydrogen ions are translocated across the cytoplasmic membrane), and thus conserves the redox energy in a proton gradient. The protein is NADH-quinone oxidoreductase subunit K of Mycobacterium sp. (strain KMS).